Here is a 388-residue protein sequence, read N- to C-terminus: tRNA 2-selenouridine synthase (388 aa).

One can recognise a Rhodanese domain in the interval 15–138 (FTADTPLIDV…ARQFLINTID (124 aa)). Cys-98 functions as the S-selanylcysteine intermediate in the catalytic mechanism.

It belongs to the SelU family. Monomer.

It carries out the reaction 5-methylaminomethyl-2-thiouridine(34) in tRNA + selenophosphate + (2E)-geranyl diphosphate + H2O + H(+) = 5-methylaminomethyl-2-selenouridine(34) in tRNA + (2E)-thiogeraniol + phosphate + diphosphate. The catalysed reaction is 5-methylaminomethyl-2-thiouridine(34) in tRNA + (2E)-geranyl diphosphate = 5-methylaminomethyl-S-(2E)-geranyl-thiouridine(34) in tRNA + diphosphate. The enzyme catalyses 5-methylaminomethyl-S-(2E)-geranyl-thiouridine(34) in tRNA + selenophosphate + H(+) = 5-methylaminomethyl-2-(Se-phospho)selenouridine(34) in tRNA + (2E)-thiogeraniol. It catalyses the reaction 5-methylaminomethyl-2-(Se-phospho)selenouridine(34) in tRNA + H2O = 5-methylaminomethyl-2-selenouridine(34) in tRNA + phosphate. In terms of biological role, involved in the post-transcriptional modification of the uridine at the wobble position (U34) of tRNA(Lys), tRNA(Glu) and tRNA(Gln). Catalyzes the conversion of 2-thiouridine (S2U-RNA) to 2-selenouridine (Se2U-RNA). Acts in a two-step process involving geranylation of 2-thiouridine (S2U) to S-geranyl-2-thiouridine (geS2U) and subsequent selenation of the latter derivative to 2-selenouridine (Se2U) in the tRNA chain. This Nitrosomonas eutropha (strain DSM 101675 / C91 / Nm57) protein is tRNA 2-selenouridine synthase.